A 236-amino-acid polypeptide reads, in one-letter code: Cancer/testis antigen 55 (236 aa).

The interval 57–84 is disordered; it reads RSSADVETGDNPLKAEPNLPAAVEEQSP.

As to quaternary structure, interacts with GABARAP; this interaction may be important for GABARAP protein stability. Interacts with LAMP2; this interaction may be important for LAMP2 protein stability. In terms of tissue distribution, expressed in spermatozoa (at protein level).

Its subcellular location is the cytoplasm. It is found in the cytoplasmic vesicle. It localises to the secretory vesicle. The protein resides in the acrosome. The protein localises to the cell projection. Its subcellular location is the cilium. It is found in the flagellum. Functionally, plays a role in spermatogenesis, possibly acting in the regulation of the autophagy pathway. The polypeptide is Cancer/testis antigen 55 (Ct55) (Mus musculus (Mouse)).